Here is a 136-residue protein sequence, read N- to C-terminus: MSTSCSNPDDQVKARNDKFMAALNDATDIDLVMSFFSPDVSYSDFAFEAVNMDFTSTRDYMDKMFHAVDDLHLTQVSLTGDKDFTASEWVMTYKLKSSDKVGEVVKMRGVSLSWYDAQGLIVRNNDYSLKWSGDID.

Belongs to the aurE cyclase family.

It functions in the pathway polyketide biosynthesis. Functionally, cyclase; part of the gene cluster that mediates the biosynthesis of aurovertins, fungal polyketides that exhibit potent inhibition of adenosine triphosphate synthase. Tha biosynthesis starts with the HR-PKS aurA that selects propionate as the starter unit; synthesizes a hexa-ene chain through the repeated functions of the KR and DH domains in the first six iterations; selectively introduces three alpha-methyl substitutions at C4, C6, and C16 using the S-adensylmethionine-dependent cMET; and shuts off KR and DH in the last three iterations to afford a 1,3,5-triketo portion that can undergo intramolecular cyclization to yield the alpha-pyrone intermediate. AurE may act as a cyclase and enhances the rate of pyrone formation and product release of aurA. The methyltransferase aurB then methylates the C17 hydroxyl group. C17 methylation is required to initiate epoxidation by the downstream monooxygenase aurC. The monooxygenase aurC and the epoxide hydrolase aurD can iteratively transform the terminal triene portion of the methylated precursor into the dioxabicyclo[3.2.1]octane scaffold of aurovertin E. Epoxidation modifications of the precursor occur in two separate steps; bis-epoxidation of the two terminal olefins takes place first, followed by another epoxidation that occurs at C7-C8 after tetrahydrofuran formation. The O-acyltransferase aurG converts aurovertin E to aurovertin A. The protein is Cyclase aurE of Calcarisporium arbuscula (Dendryphion arbuscula).